A 175-amino-acid chain; its full sequence is Bifunctional protein PyrR (175 aa).

The short motif at V98 to T110 is the PRPP-binding element.

Belongs to the purine/pyrimidine phosphoribosyltransferase family. PyrR subfamily. In terms of assembly, homodimer and homohexamer; in equilibrium.

It catalyses the reaction UMP + diphosphate = 5-phospho-alpha-D-ribose 1-diphosphate + uracil. In terms of biological role, regulates transcriptional attenuation of the pyrimidine nucleotide (pyr) operon by binding in a uridine-dependent manner to specific sites on pyr mRNA. This disrupts an antiterminator hairpin in the RNA and favors formation of a downstream transcription terminator, leading to a reduced expression of downstream genes. Also displays a weak uracil phosphoribosyltransferase activity which is not physiologically significant. This chain is Bifunctional protein PyrR, found in Staphylococcus aureus (strain bovine RF122 / ET3-1).